The primary structure comprises 279 residues: Energy-coupling factor transporter ATP-binding protein EcfA1 (279 aa).

Residues 5 to 240 (IELKKVTFNY…GDELLQLGLD (236 aa)) form the ABC transporter domain. 40-47 (GHNGSGKS) lines the ATP pocket.

The protein belongs to the ABC transporter superfamily. Energy-coupling factor EcfA family. As to quaternary structure, forms a stable energy-coupling factor (ECF) transporter complex composed of 2 membrane-embedded substrate-binding proteins (S component), 2 ATP-binding proteins (A component) and 2 transmembrane proteins (T component).

Its subcellular location is the cell membrane. Its function is as follows. ATP-binding (A) component of a common energy-coupling factor (ECF) ABC-transporter complex. Unlike classic ABC transporters this ECF transporter provides the energy necessary to transport a number of different substrates. The chain is Energy-coupling factor transporter ATP-binding protein EcfA1 from Streptococcus pyogenes serotype M5 (strain Manfredo).